The following is a 350-amino-acid chain: Protein-glutamate methylesterase/protein-glutamine glutaminase 1 (350 aa).

Residues 6 to 123 form the Response regulatory domain; it reads RVLVVDDSAL…GRSVENYAEE (118 aa). A 4-aspartylphosphate modification is found at Asp-57. Residues 159 to 350 form the CheB-type methylesterase domain; it reads LGASGKIIFV…ARRVLGAVSA (192 aa). Active-site residues include Ser-171, His-197, and Asp-293.

The protein belongs to the CheB family. Post-translationally, phosphorylated by CheA. Phosphorylation of the N-terminal regulatory domain activates the methylesterase activity.

It is found in the cytoplasm. The catalysed reaction is [protein]-L-glutamate 5-O-methyl ester + H2O = L-glutamyl-[protein] + methanol + H(+). The enzyme catalyses L-glutaminyl-[protein] + H2O = L-glutamyl-[protein] + NH4(+). Functionally, involved in chemotaxis. Part of a chemotaxis signal transduction system that modulates chemotaxis in response to various stimuli. Catalyzes the demethylation of specific methylglutamate residues introduced into the chemoreceptors (methyl-accepting chemotaxis proteins or MCP) by CheR. Also mediates the irreversible deamidation of specific glutamine residues to glutamic acid. The protein is Protein-glutamate methylesterase/protein-glutamine glutaminase 1 of Dechloromonas aromatica (strain RCB).